A 199-amino-acid polypeptide reads, in one-letter code: Holliday junction branch migration complex subunit RuvA (199 aa).

The segment at 1-63 (MIASVRGEVL…EDSMTLYGFS (63 aa)) is domain I. A domain II region spans residues 64-141 (DTESKDLFSL…DAVATTAGAA (78 aa)). The flexible linker stretch occupies residues 141–145 (ASGAV). Positions 146-199 (VGSSIRDQIVEALEGLGFPIKQAEQATDSVLAESPEATTSVALRSALSLLGKTR) are domain III.

This sequence belongs to the RuvA family. As to quaternary structure, homotetramer. Forms an RuvA(8)-RuvB(12)-Holliday junction (HJ) complex. HJ DNA is sandwiched between 2 RuvA tetramers; dsDNA enters through RuvA and exits via RuvB. An RuvB hexamer assembles on each DNA strand where it exits the tetramer. Each RuvB hexamer is contacted by two RuvA subunits (via domain III) on 2 adjacent RuvB subunits; this complex drives branch migration. In the full resolvosome a probable DNA-RuvA(4)-RuvB(12)-RuvC(2) complex forms which resolves the HJ.

Its subcellular location is the cytoplasm. The RuvA-RuvB-RuvC complex processes Holliday junction (HJ) DNA during genetic recombination and DNA repair, while the RuvA-RuvB complex plays an important role in the rescue of blocked DNA replication forks via replication fork reversal (RFR). RuvA specifically binds to HJ cruciform DNA, conferring on it an open structure. The RuvB hexamer acts as an ATP-dependent pump, pulling dsDNA into and through the RuvAB complex. HJ branch migration allows RuvC to scan DNA until it finds its consensus sequence, where it cleaves and resolves the cruciform DNA. This is Holliday junction branch migration complex subunit RuvA from Rhodococcus erythropolis (strain PR4 / NBRC 100887).